A 410-amino-acid chain; its full sequence is 3-phosphoshikimate 1-carboxyvinyltransferase (410 aa).

3-phosphoshikimate contacts are provided by K27, S28, and R32. Position 27 (K27) interacts with phosphoenolpyruvate. 2 residues coordinate phosphoenolpyruvate: G91 and R119. 3-phosphoshikimate contacts are provided by S161, S162, Q163, D297, Q319, and K323. Q163 is a phosphoenolpyruvate binding site. D297 functions as the Proton acceptor in the catalytic mechanism. Phosphoenolpyruvate contacts are provided by R327, R368, and K394.

The protein belongs to the EPSP synthase family. As to quaternary structure, monomer.

It is found in the cytoplasm. The catalysed reaction is 3-phosphoshikimate + phosphoenolpyruvate = 5-O-(1-carboxyvinyl)-3-phosphoshikimate + phosphate. It functions in the pathway metabolic intermediate biosynthesis; chorismate biosynthesis. In terms of biological role, catalyzes the transfer of the enolpyruvyl moiety of phosphoenolpyruvate (PEP) to the 5-hydroxyl of shikimate-3-phosphate (S3P) to produce enolpyruvyl shikimate-3-phosphate and inorganic phosphate. The protein is 3-phosphoshikimate 1-carboxyvinyltransferase of Pyrococcus abyssi (strain GE5 / Orsay).